A 333-amino-acid polypeptide reads, in one-letter code: UDP-N-acetylglucosamine 4,6-dehydratase (inverting) (333 aa).

NADP(+) contacts are provided by residues 19–22 (TGSF), 43–48 (SRDELK), 67–68 (DV), alanine 87, lysine 91, and 129–130 (LS). Lysine 91 is a substrate binding site. Residue lysine 133 is part of the active site. NADP(+)-binding residues include tyrosine 141 and lysine 145. Residue asparagine 173 coordinates substrate. Position 174–178 (174–178 (VVGSR)) interacts with NADP(+). Substrate-binding residues include valine 181, threonine 199, arginine 258, and glutamate 261.

It belongs to the polysaccharide synthase family. As to quaternary structure, homohexamer. NADP(+) is required as a cofactor.

It catalyses the reaction UDP-N-acetyl-alpha-D-glucosamine = UDP-2-acetamido-2,6-dideoxy-beta-L-arabino-hex-4-ulose + H2O. Catalyzes the first step in the biosynthesis of pseudaminic acid, a sialic-acid-like sugar that is used to modify flagellin. Has both C6 dehydratase and C5 epimerase activities that result in the production of both UDP-2-acetamido-2,6-dideoxy-beta-L-arabino-4-hexulose and UDP-2-acetamido-2,6-dideoxy-alpha-D-xylo-4-hexulose. This Helicobacter pylori (strain ATCC 700392 / 26695) (Campylobacter pylori) protein is UDP-N-acetylglucosamine 4,6-dehydratase (inverting) (pseB).